A 1929-amino-acid polypeptide reads, in one-letter code: Myoferlin (1929 aa).

A disordered region spans residues 1–53; sequence MISYEPPPSAISNPTDPGGTTIIQGDGENDEEEDRDIVDAGFNPSVPGAPGQT. A compositionally biased stretch (acidic residues) spans 27–36; the sequence is GENDEEEDRD. C2 domains follow at residues 62 to 179 and 218 to 354; these read VKGK…RKWV and EDDD…EEYD. Ca(2+) contacts are provided by aspartate 267, aspartate 275, aspartate 323, aspartate 325, and aspartate 331. Residues 898-907 are compositionally biased toward basic residues; it reads RRLVRKRKKD. Residues 898–918 are disordered; that stretch reads RRLVRKRKKDPKVSTTSKAAL. 4 consecutive C2 domains span residues 996-1124, 1159-1283, 1408-1527, and 1645-1793; these read GANT…LLWY, RAPQ…TKHE, IPYP…SHCG, and GPPG…EKCS. Ca(2+) is bound by residues aspartate 1028, aspartate 1034, aspartate 1090, and aspartate 1092. Residues aspartate 1442, aspartate 1448, aspartate 1497, aspartate 1499, aspartate 1764, serine 1767, and aspartate 1770 each contribute to the Ca(2+) site. A compositionally biased stretch (basic and acidic residues) spans 1845 to 1858; sequence DAEERPAGKGRDEP. The tract at residues 1845–1867 is disordered; sequence DAEERPAGKGRDEPNMNPKLDPP. Residues 1894-1914 form a helical membrane-spanning segment; the sequence is WVFIGLIILLLVLLFLGVFFY.

Belongs to the ferlin family. The cofactor is Ca(2+).

It localises to the cell membrane. It is found in the nucleus membrane. The protein resides in the cytoplasmic vesicle membrane. Functionally, may play a role in membrane regeneration and repair. This Xenopus tropicalis (Western clawed frog) protein is Myoferlin (myof).